The following is a 702-amino-acid chain: Ribosomal RNA large subunit methyltransferase K/L (702 aa).

One can recognise a THUMP domain in the interval 43-154 (LVYQSLMWSR…KETASIALDL (112 aa)).

Belongs to the methyltransferase superfamily. RlmKL family.

The protein resides in the cytoplasm. The catalysed reaction is guanosine(2445) in 23S rRNA + S-adenosyl-L-methionine = N(2)-methylguanosine(2445) in 23S rRNA + S-adenosyl-L-homocysteine + H(+). It carries out the reaction guanosine(2069) in 23S rRNA + S-adenosyl-L-methionine = N(2)-methylguanosine(2069) in 23S rRNA + S-adenosyl-L-homocysteine + H(+). In terms of biological role, specifically methylates the guanine in position 2445 (m2G2445) and the guanine in position 2069 (m7G2069) of 23S rRNA. In Escherichia coli (strain K12 / DH10B), this protein is Ribosomal RNA large subunit methyltransferase K/L.